Consider the following 325-residue polypeptide: Sensor histidine kinase YxdK (325 aa).

Residues 1-8 (MKLFLRSH) lie on the Cytoplasmic side of the membrane. A helical membrane pass occupies residues 9-29 (AVLILLFLLQGLFVFFYYWFA). The Extracellular portion of the chain corresponds to 30-33 (GLHS). A helical transmembrane segment spans residues 34–54 (FSHLFYILGVQLLILAGYLAY). Residues 55–325 (RWYKDRGVYH…SVRFSFLTKM (271 aa)) lie on the Cytoplasmic side of the membrane. Residues 118 to 325 (QWVHQVKTPL…SVRFSFLTKM (208 aa)) form the Histidine kinase domain. Position 121 is a phosphohistidine; by autocatalysis (histidine 121).

It localises to the cell membrane. It catalyses the reaction ATP + protein L-histidine = ADP + protein N-phospho-L-histidine.. Functionally, probable member of the two-component regulatory system YxdK/YxdJ. May activate YxdJ in response to the antibacterial protein LL-37. The chain is Sensor histidine kinase YxdK (yxdK) from Bacillus subtilis (strain 168).